The chain runs to 349 residues: Cdc42 effector protein 4 (349 aa).

Lysine 5 bears the N6-methyllysine mark. Residue serine 18 is modified to Phosphoserine. One can recognise a CRIB domain in the interval 27–41 (ISAPLGDFRHTMHVG). Phosphoserine is present on residues serine 64, serine 103, serine 107, and serine 116. Positions 123–132 (KEAAEKDSSK) are enriched in basic and acidic residues. Disordered stretches follow at residues 123–172 (KEAA…LLDE), 220–240 (QWGS…GPSS), and 278–349 (GWAV…EIRV). 8 positions are modified to phosphoserine: serine 136, serine 138, serine 140, serine 154, serine 165, serine 223, serine 285, and serine 288. Residues 280–308 (AVVAPSPSSARSVGSHTTRDSSSLSSYTS) are compositionally biased toward low complexity. Over residues 311-322 (LEERSPAFRGPD) the composition is skewed to basic and acidic residues. The span at 338–349 (FMDEEEEDEIRV) shows a compositional bias: acidic residues.

The protein belongs to the BORG/CEP family. As to quaternary structure, interacts with CDC42 and RHOQ, in a GTP-dependent manner. In terms of tissue distribution, ubiquitous.

The protein localises to the endomembrane system. It is found in the cytoplasm. Its subcellular location is the cytoskeleton. Probably involved in the organization of the actin cytoskeleton. May act downstream of CDC42 to induce actin filament assembly leading to cell shape changes. Induces pseudopodia formation, when overexpressed in fibroblasts. The sequence is that of Cdc42 effector protein 4 (Cdc42ep4) from Mus musculus (Mouse).